A 388-amino-acid chain; its full sequence is CUE domain-containing protein 1 (388 aa).

Over residues 1-10 (MTSLFRRSSS) the composition is skewed to low complexity. Positions 1–45 (MTSLFRRSSSGSGGGGATGARGAGTGAGDGSTAPQELNNSRPARQ) are disordered. Gly residues predominate over residues 11–29 (GSGGGGATGARGAGTGAGD). Residues 50-93 (EFNQAMDDFKTMFPNMDYDIIECVLRANSGAVDATIDQLLQMNL) form the CUE domain. 4 disordered regions span residues 152 to 178 (PTPP…WNPP), 196 to 225 (DSIQ…ACDQ), 270 to 302 (SQKS…TVSE), and 369 to 388 (DFRG…REGQ). Over residues 290–300 (VPGTSETNPTV) the composition is skewed to polar residues.

In Mus musculus (Mouse), this protein is CUE domain-containing protein 1 (Cuedc1).